We begin with the raw amino-acid sequence, 321 residues long: MDNPSSDPLPSTLSGEEEKPLALLPPVPRGRRGRPPGGATTSNRTLKSSLPRKRGRPPRSEQETPLTAPVDSGGSSDLLLIDDQGVPYTVPEGSAADGPQGSGSKRAPHFCPVCLRAFPYLSDLERHSISHSELKPHVCKDCGKTFKRSSHLRRHCNIHAGLRPFRCVLCPRRFREAGELAHHHRIHSGERPYQCPSCRVRFTEANTLRRHYKRKHPELVGMPVRLCPPNPRTQPLWDDDEGIPVQEGVQEESPEGKEPTWPISSTTSPLSGFTAGGSAGAGRGQEGQDTLVSGGIPTMEGDQKQGPKPLGPGAIGHPPVD.

Polar residues-rich tracts occupy residues 1–14 (MDNP…STLS) and 39–48 (ATTSNRTLKS). 2 disordered regions span residues 1-80 (MDNP…DLLL) and 86-105 (VPYT…SGSK). Residues 49 to 59 (SLPRKRGRPPR) constitute a DNA-binding region (a.T hook). 4 C2H2-type zinc fingers span residues 109–131 (HFCP…SISH), 137–159 (HVCK…CNIH), 165–187 (FRCV…HRIH), and 193–216 (YQCP…KRKH). The segment at 248–321 (GVQEESPEGK…PGAIGHPPVD (74 aa)) is disordered. Residues 262–271 (PISSTTSPLS) are compositionally biased toward polar residues. Positions 274 to 285 (TAGGSAGAGRGQ) are enriched in gly residues.

It belongs to the krueppel C2H2-type zinc-finger protein family.

Its subcellular location is the nucleus. Its function is as follows. May be involved in transcriptional regulation. The chain is Zinc finger protein 524 (Znf524) from Mus musculus (Mouse).